A 273-amino-acid polypeptide reads, in one-letter code: MTKEMPVIYIISDALGETAEYVSRAAAAQFSGIRTKIRKVPYVQDEIHIDEILEEAAKEQAIIAYTLVVKKLRNYLEEKAKDYGLRTVDILGPLIKMLADQTGLLPSYTPNVTHILDEQYFRKVDAIEFAVKYDDGKDPRGVLLADVVLIGVSRTSKTPLSMYLAHKGIKAANIPLVPEVSPPQELFRVPSQKVIGLTLKPDLLNQIRTERLRTLGLGSSADYANYERIVEELEYARGIMRKVGCPIIDATGKAIEETASRILEILYKGERNV.

ADP is bound at residue 151–158 (GVSRTSKT).

It belongs to the pyruvate, phosphate/water dikinase regulatory protein family. PDRP subfamily.

It catalyses the reaction N(tele)-phospho-L-histidyl/L-threonyl-[pyruvate, phosphate dikinase] + ADP = N(tele)-phospho-L-histidyl/O-phospho-L-threonyl-[pyruvate, phosphate dikinase] + AMP + H(+). The enzyme catalyses N(tele)-phospho-L-histidyl/O-phospho-L-threonyl-[pyruvate, phosphate dikinase] + phosphate + H(+) = N(tele)-phospho-L-histidyl/L-threonyl-[pyruvate, phosphate dikinase] + diphosphate. Its function is as follows. Bifunctional serine/threonine kinase and phosphorylase involved in the regulation of the pyruvate, phosphate dikinase (PPDK) by catalyzing its phosphorylation/dephosphorylation. The polypeptide is Putative pyruvate, phosphate dikinase regulatory protein (Desulfitobacterium hafniense (strain DSM 10664 / DCB-2)).